The sequence spans 349 residues: Probable arabinogalactan endo-beta-1,4-galactanase A (349 aa).

Positions 1 to 15 are cleaved as a signal peptide; that stretch reads MLLSFLPLLPLATAA. Asparagine 126 carries an N-linked (GlcNAc...) asparagine glycan. Glutamate 150 functions as the Proton donor in the catalytic mechanism. Residue glutamate 261 is the Nucleophile of the active site.

It belongs to the glycosyl hydrolase 53 family.

It localises to the secreted. It catalyses the reaction The enzyme specifically hydrolyzes (1-&gt;4)-beta-D-galactosidic linkages in type I arabinogalactans.. Its function is as follows. Endogalactanase involved in the degradation of plant cell wall polysaccharides, and more particularly of hairy regions of pectin. The protein is Probable arabinogalactan endo-beta-1,4-galactanase A (galA) of Aspergillus terreus (strain NIH 2624 / FGSC A1156).